Consider the following 201-residue polypeptide: Recombination protein RecR (201 aa).

A C4-type zinc finger spans residues 60–75 (CTSCGNVDTSDPCTIC). The Toprim domain maps to 83-178 (TTLVVVEDVS…KVTRLAHGVP (96 aa)).

This sequence belongs to the RecR family.

Functionally, may play a role in DNA repair. It seems to be involved in an RecBC-independent recombinational process of DNA repair. It may act with RecF and RecO. The protein is Recombination protein RecR of Methylobacterium radiotolerans (strain ATCC 27329 / DSM 1819 / JCM 2831 / NBRC 15690 / NCIMB 10815 / 0-1).